The following is a 304-amino-acid chain: tRNA dimethylallyltransferase (304 aa).

2 to 9 (GPTASGKT) contributes to the ATP binding site. A substrate-binding site is contributed by 4–9 (TASGKT). Residues 28-31 (DSAL) form an interaction with substrate tRNA region.

This sequence belongs to the IPP transferase family. As to quaternary structure, monomer. Mg(2+) serves as cofactor.

It catalyses the reaction adenosine(37) in tRNA + dimethylallyl diphosphate = N(6)-dimethylallyladenosine(37) in tRNA + diphosphate. Functionally, catalyzes the transfer of a dimethylallyl group onto the adenine at position 37 in tRNAs that read codons beginning with uridine, leading to the formation of N6-(dimethylallyl)adenosine (i(6)A). This is tRNA dimethylallyltransferase from Blochmanniella pennsylvanica (strain BPEN).